Consider the following 1960-residue polypeptide: Transcription factor 20 (1960 aa).

Residues 1 to 18 (MQSFREQSSYHGNQQSYP) are compositionally biased toward polar residues. The tract at residues 1–287 (MQSFREQSSY…GSNAQAYGTQ (287 aa)) is disordered. A compositionally biased stretch (gly residues) spans 42–60 (GGTGGSSGSSGSGSGGGRR). At R60 the chain carries Omega-N-methylarginine. Residues 61-75 (GAAAAAAAMASETSG) show a composition bias toward low complexity. Positions 122–131 (QGSSFGNQYG) are enriched in polar residues. The span at 164 to 192 (SAQYQQQASSQQQQQQVQQLRQQLYQSHQ) shows a compositional bias: low complexity. The span at 193-219 (PLPQATGQPASSSSHLQPMQRPSTLPS) shows a compositional bias: polar residues. Residues 236–259 (QSSASSSSSSSFPSPQRFSQSGQS) are compositionally biased toward low complexity. 2 stretches are compositionally biased toward polar residues: residues 260-270 (YDGSYNVNAGS) and 277-287 (VGSNAQAYGTQ). K304 is covalently cross-linked (Glycyl lysine isopeptide (Lys-Gly) (interchain with G-Cter in SUMO2)). Disordered stretches follow at residues 305-328 (IPQG…SQHV) and 360-392 (FHQN…LMQT). Composition is skewed to low complexity over residues 306–322 (PQGT…QQQQ) and 368–388 (SNPS…TPSP). A phosphoserine mark is found at S419 and S430. A disordered region spans residues 476-748 (SDALTPQKKT…HGERKGRNEK (273 aa)). 2 stretches are compositionally biased toward polar residues: residues 497–508 (SCTNSEGSSQPE) and 537–547 (LSGQSTSSDTT). 4 positions are modified to phosphoserine: S538, S559, S574, and S583. K602 is modified (N6-acetyllysine). The span at 616–628 (RVEKPGGQDKGSQ) shows a compositional bias: basic and acidic residues. S640 is modified (phosphoserine). Residues 665-677 (GNKNGDNNSNHNG) are compositionally biased toward low complexity. Positions 693–702 (TSRTEPSKSP) are enriched in polar residues. Residues K710, K733, K748, K823, K832, and K844 each participate in a glycyl lysine isopeptide (Lys-Gly) (interchain with G-Cter in SUMO2) cross-link. Positions 732-748 (EKGDFTGHGERKGRNEK) are enriched in basic and acidic residues. S871 carries the post-translational modification Phosphoserine. Residues K920 and K922 each participate in a glycyl lysine isopeptide (Lys-Gly) (interchain with G-Cter in SUMO2) cross-link. The segment at 920 to 1037 (KLKSQSGQIK…GDPHHMNPHM (118 aa)) is disordered. A Glycyl lysine isopeptide (Lys-Gly) (interchain with G-Cter in SUMO1); alternate cross-link involves residue K929. Residue K929 forms a Glycyl lysine isopeptide (Lys-Gly) (interchain with G-Cter in SUMO2); alternate linkage. Residues 936–945 (SKSQASFNNK) show a composition bias toward polar residues. The span at 946–961 (KSGDHCHPPSIKHESY) shows a compositional bias: basic and acidic residues. Residue K957 forms a Glycyl lysine isopeptide (Lys-Gly) (interchain with G-Cter in SUMO2) linkage. Phosphoserine is present on residues S966 and S1005. Residue K1015 forms a Glycyl lysine isopeptide (Lys-Gly) (interchain with G-Cter in SUMO2) linkage. Residue R1024 is modified to Omega-N-methylarginine. S1053 is modified (phosphoserine). Residues K1086, K1098, K1137, K1173, K1178, K1183, K1210, K1231, K1267, and K1274 each participate in a glycyl lysine isopeptide (Lys-Gly) (interchain with G-Cter in SUMO2) cross-link. 3 disordered regions span residues 1110 to 1142 (AAAQ…DKDG), 1162 to 1285 (RCLM…GRLL), and 1303 to 1331 (SHSQ…CPAV). A compositionally biased stretch (basic and acidic residues) spans 1130-1142 (DRVRSPLKNDKDG). The leucine-zipper stretch occupies residues 1170 to 1191 (LPNKGMELKHGSQKLQESCWDL). A Nuclear localization signal motif is present at residues 1254 to 1268 (RRRVRSFISPIPSKR). A compositionally biased stretch (basic and acidic residues) spans 1304 to 1318 (HSQDIKSIPKRDSSK). S1305 is modified (phosphoserine). K1309 participates in a covalent cross-link: Glycyl lysine isopeptide (Lys-Gly) (interchain with G-Cter in SUMO2). Position 1335 is a phosphoserine (S1335). K1338 is covalently cross-linked (Glycyl lysine isopeptide (Lys-Gly) (interchain with G-Cter in SUMO2)). S1361 is subject to Phosphoserine. Positions 1384–1607 (DILSLKSGPP…TKQAVPIVEP (224 aa)) are disordered. Residues K1389, K1409, K1428, and K1446 each participate in a glycyl lysine isopeptide (Lys-Gly) (interchain with G-Cter in SUMO2) cross-link. The segment covering 1424-1451 (LHVEKPLPRSSEEWRGSVDDKVKTETHA) has biased composition (basic and acidic residues). Over residues 1464 to 1477 (MTSTTSQKPGSNQG) the composition is skewed to polar residues. K1510 is covalently cross-linked (Glycyl lysine isopeptide (Lys-Gly) (interchain with G-Cter in SUMO2)). S1522 is subject to Phosphoserine. K1524 is covalently cross-linked (Glycyl lysine isopeptide (Lys-Gly) (interchain with G-Cter in SUMO2)). Positions 1537–1551 (GKKKGRPIGSVNKQK) form a DNA-binding region, a.T hook. The span at 1555 to 1566 (QPPPPPPQPPQI) shows a compositional bias: pro residues. A Nuclear localization signal motif is present at residues 1576–1600 (KPKKQRQRRERRKPGAQPRKRKTKQ). Residues 1578 to 1599 (KKQRQRRERRKPGAQPRKRKTK) show a composition bias toward basic residues. K1613 is covalently cross-linked (Glycyl lysine isopeptide (Lys-Gly) (interchain with G-Cter in SUMO2)). 2 disordered regions span residues 1660–1683 (LVRG…KALP) and 1732–1839 (TLPK…PELE). A Phosphoserine modification is found at S1669. T1671, T1762, and T1764 each carry phosphothreonine. The Nuclear localization signal motif lies at 1785-1792 (RFKRRHRS). A C2HC pre-PHD-type; degenerate zinc finger spans residues 1829 to 1865 (PTTSEGGPELELQIPELPLDSNEFWVHEGCILWANGI). Residues 1885 to 1933 (MKCSHCQEAGATLGCYNKGCSFRYHYPCAIDADCLLHEENFSVRCPKHK) form a PHD-type zinc finger. The segment at 1939 to 1960 (PLPPLQNKTAKGSLSTEQSERG) is disordered. Residues 1944-1960 (QNKTAKGSLSTEQSERG) show a composition bias toward polar residues.

As to quaternary structure, homodimer. Interacts with RNF4 and JUN. As to expression, expressed in most tissues, except in ovary and prostate. Isoform 1 is exclusively expressed in brain, heart and testis, and this form predominates in liver and kidney. Isoform 2 predominates in lung.

The protein localises to the nucleus. Its function is as follows. Transcriptional activator that binds to the regulatory region of MMP3 and thereby controls stromelysin expression. It stimulates the activity of various transcriptional activators such as JUN, SP1, PAX6 and ETS1, suggesting a function as a coactivator. This chain is Transcription factor 20 (TCF20), found in Homo sapiens (Human).